A 122-amino-acid polypeptide reads, in one-letter code: uncharacterized protein (122 aa).

A run of 3 helical transmembrane segments spans residues 33–53 (ALGL…LTIP), 58–78 (VLGV…LLRW), and 97–117 (PGYL…LVVA).

It to E.coli YidH.

The protein resides in the cell membrane. This is an uncharacterized protein from Mycobacterium tuberculosis (strain CDC 1551 / Oshkosh).